A 130-amino-acid chain; its full sequence is S-adenosylmethionine decarboxylase proenzyme (130 aa).

Residue serine 64 is the Schiff-base intermediate with substrate; via pyruvic acid of the active site. Serine 64 is subject to Pyruvic acid (Ser); by autocatalysis. Residue histidine 69 is the Proton acceptor; for processing activity of the active site. The active-site Proton donor; for catalytic activity is the cysteine 84.

It belongs to the prokaryotic AdoMetDC family. Type 1 subfamily. In terms of assembly, heterotetramer of two alpha and two beta chains arranged as a dimer of alpha/beta heterodimers. The cofactor is pyruvate. Post-translationally, is synthesized initially as an inactive proenzyme. Formation of the active enzyme involves a self-maturation process in which the active site pyruvoyl group is generated from an internal serine residue via an autocatalytic post-translational modification. Two non-identical subunits are generated from the proenzyme in this reaction, and the pyruvate is formed at the N-terminus of the alpha chain, which is derived from the carboxyl end of the proenzyme. The post-translation cleavage follows an unusual pathway, termed non-hydrolytic serinolysis, in which the side chain hydroxyl group of the serine supplies its oxygen atom to form the C-terminus of the beta chain, while the remainder of the serine residue undergoes an oxidative deamination to produce ammonia and the pyruvoyl group blocking the N-terminus of the alpha chain.

The enzyme catalyses S-adenosyl-L-methionine + H(+) = S-adenosyl 3-(methylsulfanyl)propylamine + CO2. The protein operates within amine and polyamine biosynthesis; S-adenosylmethioninamine biosynthesis; S-adenosylmethioninamine from S-adenosyl-L-methionine: step 1/1. Catalyzes the decarboxylation of S-adenosylmethionine to S-adenosylmethioninamine (dcAdoMet), the propylamine donor required for the synthesis of the polyamines spermine and spermidine from the diamine putrescine. This Thermoplasma volcanium (strain ATCC 51530 / DSM 4299 / JCM 9571 / NBRC 15438 / GSS1) protein is S-adenosylmethionine decarboxylase proenzyme.